The following is a 223-amino-acid chain: Protein-L-isoaspartate O-methyltransferase (223 aa).

The active site involves Ser-70.

Belongs to the methyltransferase superfamily. L-isoaspartyl/D-aspartyl protein methyltransferase family.

The protein resides in the cytoplasm. The catalysed reaction is [protein]-L-isoaspartate + S-adenosyl-L-methionine = [protein]-L-isoaspartate alpha-methyl ester + S-adenosyl-L-homocysteine. In terms of biological role, catalyzes the methyl esterification of L-isoaspartyl residues in peptides and proteins that result from spontaneous decomposition of normal L-aspartyl and L-asparaginyl residues. It plays a role in the repair and/or degradation of damaged proteins. The polypeptide is Protein-L-isoaspartate O-methyltransferase (Methylobacillus flagellatus (strain ATCC 51484 / DSM 6875 / VKM B-1610 / KT)).